The chain runs to 122 residues: Large ribosomal subunit protein bL12 (122 aa).

This sequence belongs to the bacterial ribosomal protein bL12 family. As to quaternary structure, homodimer. Part of the ribosomal stalk of the 50S ribosomal subunit. Forms a multimeric L10(L12)X complex, where L10 forms an elongated spine to which 2 to 4 L12 dimers bind in a sequential fashion. Binds GTP-bound translation factors.

Its function is as follows. Forms part of the ribosomal stalk which helps the ribosome interact with GTP-bound translation factors. Is thus essential for accurate translation. In Vibrio vulnificus (strain CMCP6), this protein is Large ribosomal subunit protein bL12.